The chain runs to 95 residues: Defensin alpha 4 (95 aa).

An N-terminal signal peptide occupies residues 1 to 19 (MRTLALLAAILLVALQAQA). Residues 20–62 (EHISVSIDEVVDQQPPQAEDQDVAIYVKEHESSALEALGVKAG) constitute a propeptide that is removed on maturation. Disulfide bonds link Cys65-Cys93, Cys67-Cys82, and Cys72-Cys92.

This sequence belongs to the alpha-defensin family.

It is found in the secreted. In terms of biological role, host-defense peptide that has antimicrobial activity. Inhibits corticotropin (ACTH)-stimulated corticosterone production (in vitro). The protein is Defensin alpha 4 of Oryctolagus cuniculus (Rabbit).